We begin with the raw amino-acid sequence, 475 residues long: MAKLHITTWGCQMNEYDSSKMADLLNSTHGLELTDKPEEADILLLNTCSIREKAQEKVFSQLGRWKNWKKDKPDLIIGVGGCVASQEGEHIRERAPFVDIVFGPQTLHRLPEMINQIRSGDRAVVDISFPEIEKFDRLPEPKAEGPTAFVSIMEGCNKYCSFCVVPYTRGEEVSRPVDDVLFEIAQLAEQGVREVNLLGQNVNAYRGETFDGGICTFAELLRLVAAIDGIDRLRYTTSHPIEFTDDIIEVYRDTPELVSFLHLPIQSGADRVLTMMKRNHTALEYKAIIRKLRAVRPNIQISSDFIVGFPGETAEDFEQTMKIIEQVNFDMSFSFIYSARPGTPASDLPDDVSENEKKDRLAHLQQRINHQAMQFSRLMLGTEQRILVEGPSKKDIMELTGRTETNRVVNFIGTPNMIGKFVDIKITDVYSNSLRGEVIRTEDQMGLRIVESASSVIARTRKEDDLGVGKYAVNL.

Residues 2-119 form the MTTase N-terminal domain; sequence AKLHITTWGC…LPEMINQIRS (118 aa). [4Fe-4S] cluster is bound by residues Cys11, Cys48, Cys82, Cys156, Cys160, and Cys163. Residues 142–374 enclose the Radical SAM core domain; sequence KAEGPTAFVS…QQRINHQAMQ (233 aa). The 64-residue stretch at 377 to 440 folds into the TRAM domain; sequence RLMLGTEQRI…SNSLRGEVIR (64 aa).

The protein belongs to the methylthiotransferase family. MiaB subfamily. As to quaternary structure, monomer. The cofactor is [4Fe-4S] cluster.

The protein localises to the cytoplasm. The catalysed reaction is N(6)-dimethylallyladenosine(37) in tRNA + (sulfur carrier)-SH + AH2 + 2 S-adenosyl-L-methionine = 2-methylsulfanyl-N(6)-dimethylallyladenosine(37) in tRNA + (sulfur carrier)-H + 5'-deoxyadenosine + L-methionine + A + S-adenosyl-L-homocysteine + 2 H(+). Its function is as follows. Catalyzes the methylthiolation of N6-(dimethylallyl)adenosine (i(6)A), leading to the formation of 2-methylthio-N6-(dimethylallyl)adenosine (ms(2)i(6)A) at position 37 in tRNAs that read codons beginning with uridine. The chain is tRNA-2-methylthio-N(6)-dimethylallyladenosine synthase from Haemophilus ducreyi (strain 35000HP / ATCC 700724).